Reading from the N-terminus, the 389-residue chain is Urotensin-2 receptor (389 aa).

2 stretches are compositionally biased toward polar residues: residues 1 to 10 and 28 to 39; these read MALTPESPSS and PNATLNSSWASP. The interval 1–39 is disordered; it reads MALTPESPSSFPGLAAIGSSVPEPPGSPNATLNSSWASP. Topologically, residues 1–54 are extracellular; the sequence is MALTPESPSSFPGLAAIGSSVPEPPGSPNATLNSSWASPTEPSSLEDLVATGAI. N-linked (GlcNAc...) asparagine glycans are attached at residues Asn29 and Asn33. A helical transmembrane segment spans residues 55 to 77; it reads GTLLSAMGVVGVVGNAYTLVVTC. The Cytoplasmic portion of the chain corresponds to 78-87; the sequence is RSLRAVASMY. Residues 88–113 traverse the membrane as a helical segment; the sequence is IYVVNLALADLLYLLSIPFIVATYIT. The Extracellular portion of the chain corresponds to 114–124; that stretch reads KEWHFGDVGCR. An intrachain disulfide couples Cys123 to Cys199. Residues 125–146 traverse the membrane as a helical segment; the sequence is VLFSLDFLTMHASIFTLTVMSS. The Cytoplasmic segment spans residues 147–167; it reads ERYAAVLRPLDTVQRPKGYRK. The helical transmembrane segment at 168–186 threads the bilayer; sequence LLALGTWLLALLLTLPVML. Residues 187 to 209 lie on the Extracellular side of the membrane; sequence AMRLVRRGPKSLCLPAWGPRAHR. The helical transmembrane segment at 210-232 threads the bilayer; the sequence is AYLTLLFATSIAGPGLLIGLLYA. The Cytoplasmic portion of the chain corresponds to 233–258; it reads RLARAYRRSQRASFKRARRPGARALR. Residues 259-284 form a helical membrane-spanning segment; that stretch reads LVLGIVLLFWACFLPFWLWQLLAQYR. Residues 285-297 lie on the Extracellular side of the membrane; sequence EAPLAPRTARIVN. A helical transmembrane segment spans residues 298 to 318; sequence YLTTCLTYGNSCANPFLYTLL. Residues 319–389 are Cytoplasmic-facing; that stretch reads TRNYRDHLRG…PALESPGDPA (71 aa). Residues 328–366 form a disordered region; the sequence is GRVRSPGSGGVRGPVPSLQPRARFQRGSGRSLSSCSPQP. Positions 355-366 are enriched in polar residues; the sequence is SGRSLSSCSPQP.

This sequence belongs to the G-protein coupled receptor 1 family.

The protein resides in the cell membrane. Its function is as follows. High affinity receptor for urotensin-2 and urotensin-2B. The activity of this receptor is mediated by a G-protein that activate a phosphatidylinositol-calcium second messenger system. The sequence is that of Urotensin-2 receptor (UTS2R) from Macaca mulatta (Rhesus macaque).